A 295-amino-acid polypeptide reads, in one-letter code: uncharacterized protein (295 aa).

An N-terminal signal peptide occupies residues 1 to 19; it reads MRKLLLIITVFFTFNVAQA.

This is an uncharacterized protein from Rickettsia conorii (strain ATCC VR-613 / Malish 7).